The primary structure comprises 493 residues: Cysteine sulfinic acid decarboxylase (493 aa).

N6-(pyridoxal phosphate)lysine is present on Lys305.

This sequence belongs to the group II decarboxylase family. In terms of assembly, homodimer. Pyridoxal 5'-phosphate is required as a cofactor. Expressed in kidney and liver not detected in lymphoid tissues and lung. Expressed in kidney, liver and brain. 7 and 4 times higher expression in kidney and liver than in brain, respectively. Low level of detection in skeletal muscle. Expressed in brain, olfactory bulb, liver, skeletal muscle and kidney with the highest expression in liver and lowest in skeletal muscle (at protein level).

It carries out the reaction L-aspartate + H(+) = beta-alanine + CO2. The catalysed reaction is 3-sulfino-L-alanine + H(+) = hypotaurine + CO2. The enzyme catalyses L-cysteate + H(+) = taurine + CO2. It participates in organosulfur biosynthesis; taurine biosynthesis; hypotaurine from L-cysteine: step 2/2. Activated by Mn(2+). Inhibited by bis-carboxymethyl-trithiocarbonate, ethylxanthogenacetic acid and 2,5-disulfoaniline. Not affected by Li(+) within 0.05-40 mM concentration range. Its function is as follows. Catalyzes the decarboxylation of L-aspartate, 3-sulfino-L-alanine (cysteine sulfinic acid), and L-cysteate to beta-alanine, hypotaurine and taurine, respectively. The preferred substrate is 3-sulfino-L-alanine. Does not exhibit any decarboxylation activity toward glutamate. The chain is Cysteine sulfinic acid decarboxylase from Mus musculus (Mouse).